The primary structure comprises 70 residues: Probable tautomerase RSp0893 (70 aa).

Pro-2 functions as the Proton acceptor; via imino nitrogen in the catalytic mechanism.

Belongs to the 4-oxalocrotonate tautomerase family.

In Ralstonia nicotianae (strain ATCC BAA-1114 / GMI1000) (Ralstonia solanacearum), this protein is Probable tautomerase RSp0893.